The following is a 107-amino-acid chain: U1-lycotoxin-Ls1b (107 aa).

Residues 1 to 20 (MMKVLVVVALLVTLISYSSS) form the signal peptide. A propeptide spanning residues 21–41 (EGIDDLEADELSSLMANEQTR) is cleaved from the precursor. 4 cysteine pairs are disulfide-bonded: Cys44/Cys59, Cys51/Cys68, Cys58/Cys86, and Cys70/Cys84.

Belongs to the neurotoxin 19 (CSTX) family. 04 (U1-Lctx) subfamily. Expressed by the venom gland.

The protein resides in the secreted. The polypeptide is U1-lycotoxin-Ls1b (Lycosa singoriensis (Wolf spider)).